We begin with the raw amino-acid sequence, 509 residues long: Maturase K (509 aa).

Belongs to the intron maturase 2 family. MatK subfamily.

It is found in the plastid. Its subcellular location is the chloroplast. Usually encoded in the trnK tRNA gene intron. Probably assists in splicing its own and other chloroplast group II introns. In Nicotiana glauca (Glaucous tobacco), this protein is Maturase K.